The chain runs to 101 residues: B3 domain-containing protein At1g08985 (101 aa).

Positions 7–101 (IVKTLSETDC…WQNTKFIFSM (95 aa)) form a DNA-binding region, TF-B3.

The protein localises to the nucleus. The polypeptide is B3 domain-containing protein At1g08985 (Arabidopsis thaliana (Mouse-ear cress)).